The primary structure comprises 439 residues: Methylenetetrahydrofolate--tRNA-(uracil-5-)-methyltransferase TrmFO (439 aa).

Residue 8–13 (GAGLAG) coordinates FAD.

The protein belongs to the MnmG family. TrmFO subfamily. The cofactor is FAD.

It is found in the cytoplasm. The enzyme catalyses uridine(54) in tRNA + (6R)-5,10-methylene-5,6,7,8-tetrahydrofolate + NADH + H(+) = 5-methyluridine(54) in tRNA + (6S)-5,6,7,8-tetrahydrofolate + NAD(+). It catalyses the reaction uridine(54) in tRNA + (6R)-5,10-methylene-5,6,7,8-tetrahydrofolate + NADPH + H(+) = 5-methyluridine(54) in tRNA + (6S)-5,6,7,8-tetrahydrofolate + NADP(+). In terms of biological role, catalyzes the folate-dependent formation of 5-methyl-uridine at position 54 (M-5-U54) in all tRNAs. The chain is Methylenetetrahydrofolate--tRNA-(uracil-5-)-methyltransferase TrmFO from Magnetococcus marinus (strain ATCC BAA-1437 / JCM 17883 / MC-1).